Reading from the N-terminus, the 205-residue chain is Recombination protein RecR (205 aa).

Residues 58-75 form a C4-type zinc finger; it reads CSLCQNVTDKEIDPCNIC. The Toprim domain occupies 83–182; the sequence is RVVCVVEAPN…KVTRIARGIP (100 aa).

It belongs to the RecR family.

May play a role in DNA repair. It seems to be involved in an RecBC-independent recombinational process of DNA repair. It may act with RecF and RecO. This Chloroherpeton thalassium (strain ATCC 35110 / GB-78) protein is Recombination protein RecR.